The following is a 58-amino-acid chain: Small ribosomal subunit protein bS21 (58 aa).

Belongs to the bacterial ribosomal protein bS21 family.

This is Small ribosomal subunit protein bS21 from Lacticaseibacillus paracasei (strain ATCC 334 / BCRC 17002 / CCUG 31169 / CIP 107868 / KCTC 3260 / NRRL B-441) (Lactobacillus paracasei).